Reading from the N-terminus, the 553-residue chain is Transcription factor IIIB 70 kDa subunit (553 aa).

The TFIIB-type zinc finger occupies 6–39 (KQQKCKTCGHTQFDVNRYTAAGDVSCLRCGTVLE). The Zn(2+) site is built by Cys-10, Cys-13, Cys-31, and Cys-34. 2 consecutive repeat copies span residues 98–174 (IAAA…KMVK) and 193–272 (FVEK…EFKK). The segment at 98–272 (IAAALKIPDY…LQRRLNEFKK (175 aa)) is interaction with TBP and with the Pol III subunit C34. The interaction with TBP stretch occupies residues 281 to 553 (KSFREVENLE…KGLLGGNMGF (273 aa)). Positions 473 to 523 (KQEADELTGNTSKSSSGNRRKRNKSSLPAELRKELGDIDLDEDGTPRSAAD) are disordered. Residues 480–489 (TGNTSKSSSG) show a composition bias toward low complexity.

Belongs to the TFIIB family. TFIIIB comprises the TATA-binding protein (TBP), the B-related factor (BRF) and a 70 kDa polypeptide.

It localises to the nucleus. Its function is as follows. General activator of RNA polymerase III transcription. Interacts with TBP. Binds to Pol III subunit C34 and to the TAU135 component of TFIIIC. The protein is Transcription factor IIIB 70 kDa subunit (TDS4) of Candida albicans (strain SC5314 / ATCC MYA-2876) (Yeast).